The following is a 446-amino-acid chain: uncharacterized protein (446 aa).

The tract at residues 141 to 282 is disordered; it reads TEAETNGTRP…GPKPKVKRVS (142 aa). A compositionally biased stretch (polar residues) spans 159-170; sequence NSGSKPKAGTQS. Residues 194 to 210 show a composition bias toward basic and acidic residues; sequence IKSERRSISQGGEKDKA. Residues serine 200, serine 202, serine 212, and serine 214 each carry the phosphoserine modification. Composition is skewed to low complexity over residues 211–221 and 229–239; these read SSSSPSSSQQS and SPSQQNSRSSS. Residue serine 251 is modified to Phosphoserine. Residues 269–280 are compositionally biased toward basic residues; sequence GKSRGPKPKVKR. Serine 282 and serine 307 each carry phosphoserine.

This is an uncharacterized protein from Drosophila melanogaster (Fruit fly).